A 251-amino-acid polypeptide reads, in one-letter code: Triosephosphate isomerase (251 aa).

A substrate-binding site is contributed by 9–11 (NWK). The Electrophile role is filled by His95. Glu167 acts as the Proton acceptor in catalysis. Substrate is bound by residues Gly173, Ser213, and 234–235 (GG). A Phosphoserine modification is found at Ser213.

The protein belongs to the triosephosphate isomerase family. As to quaternary structure, homodimer.

The protein localises to the cytoplasm. It carries out the reaction D-glyceraldehyde 3-phosphate = dihydroxyacetone phosphate. The protein operates within carbohydrate biosynthesis; gluconeogenesis. It participates in carbohydrate degradation; glycolysis; D-glyceraldehyde 3-phosphate from glycerone phosphate: step 1/1. Functionally, involved in the gluconeogenesis. Catalyzes stereospecifically the conversion of dihydroxyacetone phosphate (DHAP) to D-glyceraldehyde-3-phosphate (G3P). The protein is Triosephosphate isomerase of Bacillus cereus (strain AH820).